The chain runs to 432 residues: Cytoplasmic 60S subunit biogenesis factor REH1 (432 aa).

The segment at F6 to H30 adopts a C2H2-type 1 zinc-finger fold. Residues Q79 to S150 form a disordered region. Positions K86–K98 are enriched in basic residues. The span at K105–N117 shows a compositional bias: basic and acidic residues. Residues R118–D143 show a composition bias toward polar residues. C2H2-type zinc fingers lie at residues T186–H209 and H237–H261.

This sequence belongs to the REI1 family. In terms of assembly, associates with nascent pre-60S particles that have not yet entered the translating pool, and is released from mature 60S subunits. Interacts with pre-60S factors NMD3, LSG1, and TIF6.

It is found in the cytoplasm. Pre-60S-associated cytoplasmic factor involved in the cytoplasmic maturation of the 60S subunit. May act redundantly with REI1 to directly promote a stabilizing structural rearrangement in cytoplasmic 60S subunit maturation independent on the REI1-specific ARX1 recycling. This chain is Cytoplasmic 60S subunit biogenesis factor REH1 (REH1), found in Saccharomyces cerevisiae (strain ATCC 204508 / S288c) (Baker's yeast).